A 150-amino-acid chain; its full sequence is S-protein homolog 28 (150 aa).

Asn122 carries N-linked (GlcNAc...) asparagine glycosylation.

This sequence belongs to the plant self-incompatibility (S1) protein family.

The protein resides in the secreted. In Arabidopsis thaliana (Mouse-ear cress), this protein is S-protein homolog 28.